Reading from the N-terminus, the 658-residue chain is Staphylocoagulase (658 aa).

A signal peptide spans 1–26 (MKKQIISLGALAVASSLFTWDNKADA). Composition is skewed to polar residues over residues 391-406 (MEQN…TQPT), 428-440 (GTES…QGES), 499-514 (PSET…QDGT), and 521-531 (PTQNKPSETNA). The tract at residues 391–531 (MEQNRPSLSD…TQNKPSETNA (141 aa)) is disordered. 6 tandem repeats follow at residues 492 to 518 (ARPR…VSYG), 519 to 545 (ARPT…VSYG), 546 to 572 (ARPT…VSYG), 573 to 599 (ARPT…VSYG), 600 to 626 (ARPT…VSYG), and 627 to 653 (ARPT…ATYG). Residues 492–653 (ARPRFNKPSE…THADGTATYG (162 aa)) form a 6 X 27 AA tandem repeats of A-R-P-[RT]-[FQY]-[NK]-K-P-S-[EK]-T-N-A-Y-N-V-T-T-[NH]-[QA]-[DN]-G-[TQ]-[VA]-[ST]-Y-G region. Positions 619 to 658 (ANGQVSYGARPTQKKPSETNAYNVTTHADGTATYGPRVTK) are disordered. Residues 636–646 (ETNAYNVTTHA) are compositionally biased toward polar residues.

It belongs to the staphylocoagulase family.

Its function is as follows. Staphylocoagulase is an extracellular protein which specifically forms a complex with human prothrombin. This complex named staphylothrombin can clot fibrinogen without any proteolytic cleavage of prothrombin. The polypeptide is Staphylocoagulase (Staphylococcus aureus).